We begin with the raw amino-acid sequence, 536 residues long: Adenine deaminase (536 aa).

The tract at residues 1 to 24 is disordered; the sequence is MTPSPHDLLHCGMNSQDRDETNGD.

This sequence belongs to the metallo-dependent hydrolases superfamily. Adenine deaminase family. The cofactor is Mn(2+).

The enzyme catalyses adenine + H2O + H(+) = hypoxanthine + NH4(+). The chain is Adenine deaminase from Deinococcus radiodurans (strain ATCC 13939 / DSM 20539 / JCM 16871 / CCUG 27074 / LMG 4051 / NBRC 15346 / NCIMB 9279 / VKM B-1422 / R1).